A 595-amino-acid polypeptide reads, in one-letter code: MRTEYCGQINLSHVGQQVTLCGWVNRRRDLGSLIFIDMRDREGIVQVFFDPDRQEAFTLASELRNEFCIQIVGTVRARDEKNKNGDMATGEIEIFATELTIINRSEPLPLDSNHINSEEARLKYRYLDLRRPDMANRLKTRAKITSFVRRFMDDQGFLDIETPMLTKATPEGARDYLVPSRVHKGKFYALPQSPQLFKQLLMMSGFDRYYQIVKCFRDEDLRADRQPEFTQIDVETSFMTAPQVREVMERLVRELWQDVKSVDLGAFPSMTFAEAMRRYGSDKPDLRNPMELVDVADLLKNVEFKVFSGPANDVKGRVAALRVPGGAALSRKQIDDYAKFIETYGAKGLAYIKVNERAKGIEGITSPVAKFLNAEIVESILQRTAAADGDLIFFGADSAKVVADALGALRLKLGRDLNITNGSVWAPLWVLDFPMFEDDGEDGLTAMHHPFTAPKEMSPEQLKNAPETAIANAYDMVINGYEVGGGSVRIHNGQMQQTVFGILGITEQEQREKFGFLLDALKFGTPPHAGLAFGLDRLVMLLTGTDNIRDVIAFPKTTAAACLMTEAPNFANPASLTELGIEVVKKAKDRPSEND.

Glu171 serves as a coordination point for L-aspartate. An aspartate region spans residues 195 to 198 (QLFK). Arg217 serves as a coordination point for L-aspartate. Residues 217-219 (RDE) and Gln226 contribute to the ATP site. His448 lines the L-aspartate pocket. Glu482 is a binding site for ATP. Residue Arg489 participates in L-aspartate binding. ATP is bound at residue 534 to 537 (GLDR).

It belongs to the class-II aminoacyl-tRNA synthetase family. Type 1 subfamily. Homodimer.

It localises to the cytoplasm. It catalyses the reaction tRNA(Asp) + L-aspartate + ATP = L-aspartyl-tRNA(Asp) + AMP + diphosphate. In terms of biological role, catalyzes the attachment of L-aspartate to tRNA(Asp) in a two-step reaction: L-aspartate is first activated by ATP to form Asp-AMP and then transferred to the acceptor end of tRNA(Asp). This chain is Aspartate--tRNA ligase, found in Erwinia tasmaniensis (strain DSM 17950 / CFBP 7177 / CIP 109463 / NCPPB 4357 / Et1/99).